Reading from the N-terminus, the 364-residue chain is DNA replication and repair protein RecF (364 aa).

ATP is bound at residue 23–30; that stretch reads GPNGIGKS.

It belongs to the RecF family.

It is found in the cytoplasm. The RecF protein is involved in DNA metabolism; it is required for DNA replication and normal SOS inducibility. RecF binds preferentially to single-stranded, linear DNA. It also seems to bind ATP. The chain is DNA replication and repair protein RecF from Synechococcus sp. (strain CC9605).